The chain runs to 101 residues: Small ribosomal subunit protein uS14 (101 aa).

Positions 51–70 are disordered; the sequence is LPRDSSPSRQRNRCRQTGRP.

Belongs to the universal ribosomal protein uS14 family. As to quaternary structure, part of the 30S ribosomal subunit. Contacts proteins S3 and S10.

Its function is as follows. Binds 16S rRNA, required for the assembly of 30S particles and may also be responsible for determining the conformation of the 16S rRNA at the A site. In Salmonella arizonae (strain ATCC BAA-731 / CDC346-86 / RSK2980), this protein is Small ribosomal subunit protein uS14.